The chain runs to 84 residues: AIFKSYCEIIVTHFPFDEQNCSMKLGTWTYDGSVVAINPESDQPDLSNFMESGEWVIKESRGWKHWVFYACCPTTPYLDITYHF.

Intrachain disulfides connect Cys-7–Cys-21 and Cys-71–Cys-72. N-linked (GlcNAc...) asparagine glycosylation occurs at Asn-20.

It belongs to the ligand-gated ion channel (TC 1.A.9) family. Acetylcholine receptor (TC 1.A.9.1) subfamily. Alpha-1/CHRNA1 sub-subfamily. As to quaternary structure, one of the alpha chains that assemble within the acetylcholine receptor, a pentamer of two alpha chains, a beta, a delta, and a gamma (in immature muscle) or epsilon (in mature muscle) chains. The muscle heteropentamer composed of alpha-1, beta-1, delta, epsilon subunits interacts with the alpha-conotoxin ImII.

It localises to the postsynaptic cell membrane. Its subcellular location is the cell membrane. It carries out the reaction K(+)(in) = K(+)(out). It catalyses the reaction Na(+)(in) = Na(+)(out). Its function is as follows. Upon acetylcholine binding, the AChR responds by an extensive change in conformation that affects all subunits and leads to opening of an ion-conducting channel across the plasma membrane. The chain is Acetylcholine receptor subunit alpha (CHRNA1) from Felis catus (Cat).